A 49-amino-acid chain; its full sequence is Osteocalcin (49 aa).

The region spanning 1–47 (YLYQWLGAPAPYPDPLEPKREVCELNPDCDELADHIGFQEAYRRFYG) is the Gla domain. Pro9 carries the 4-hydroxyproline modification. Residues Glu17, Glu21, Glu24, and Asp30 each contribute to the Ca(2+) site. 4-carboxyglutamate is present on residues Glu17, Glu21, and Glu24. The cysteines at positions 23 and 29 are disulfide-linked.

The protein belongs to the osteocalcin/matrix Gla protein family. Post-translationally, gamma-carboxyglutamate residues are formed by vitamin K dependent carboxylation by GGCX. These residues are essential for the binding of calcium. Decarboxylation promotes the hormone activity.

It is found in the secreted. The carboxylated form is one of the main organic components of the bone matrix, which constitutes 1-2% of the total bone protein: it acts as a negative regulator of bone formation and is required to limit bone formation without impairing bone resorption or mineralization. The carboxylated form binds strongly to apatite and calcium. In terms of biological role, the uncarboxylated form acts as a hormone secreted by osteoblasts, which regulates different cellular processes, such as energy metabolism, male fertility and brain development. Regulates of energy metabolism by acting as a hormone favoring pancreatic beta-cell proliferation, insulin secretion and sensitivity and energy expenditure. Uncarboxylated osteocalcin hormone also promotes testosterone production in the testes: acts as a ligand for G protein-coupled receptor GPRC6A at the surface of Leydig cells, initiating a signaling response that promotes the expression of enzymes required for testosterone synthesis in a CREB-dependent manner. Also acts as a regulator of brain development: osteocalcin hormone crosses the blood-brain barrier and acts as a ligand for GPR158 on neurons, initiating a signaling response that prevents neuronal apoptosis in the hippocampus, favors the synthesis of all monoamine neurotransmitters and inhibits that of gamma-aminobutyric acid (GABA). Osteocalcin also crosses the placenta during pregnancy and maternal osteocalcin is required for fetal brain development. The polypeptide is Osteocalcin (BGLAP) (Macaca fascicularis (Crab-eating macaque)).